The following is a 254-amino-acid chain: Triosephosphate isomerase, cytosolic (254 aa).

Residues Asn-10 and Lys-12 each coordinate substrate. The active-site Electrophile is the His-96. Glu-166 (proton acceptor) is an active-site residue.

It belongs to the triosephosphate isomerase family. In terms of assembly, homodimer.

The protein localises to the cytoplasm. It catalyses the reaction D-glyceraldehyde 3-phosphate = dihydroxyacetone phosphate. The protein operates within carbohydrate biosynthesis; gluconeogenesis. It functions in the pathway carbohydrate degradation; glycolysis; D-glyceraldehyde 3-phosphate from glycerone phosphate: step 1/1. The polypeptide is Triosephosphate isomerase, cytosolic (TPIP1) (Petunia hybrida (Petunia)).